We begin with the raw amino-acid sequence, 423 residues long: AP-1 complex subunit mu-2 (423 aa).

The MHD domain occupies 168 to 421 (KNEVFIDVIE…ITQSGDYQLR (254 aa)).

The protein belongs to the adaptor complexes medium subunit family. As to quaternary structure, adaptor protein complex 1 (AP-1) is a heterotetramer composed of two large adaptins (gamma-type subunit AP1G1 and beta-type subunit AP1B1), a medium adaptin (mu-type subunit AP1M1 or AP1M2) and a small adaptin (sigma-type subunit AP1S1 or AP1S2 or AP1S3). Interacts with P2X4. Post-translationally, phosphorylation of membrane-bound AP1M1/AP1M2 increases its affinity for sorting signals.

It localises to the cytoplasmic vesicle. It is found in the clathrin-coated vesicle membrane. The protein localises to the golgi apparatus. In terms of biological role, subunit of clathrin-associated adaptor protein complex 1 that plays a role in protein sorting in the trans-Golgi network (TGN) and endosomes. The AP complexes mediate the recruitment of clathrin to membranes and the recognition of sorting signals within the cytosolic tails of transmembrane cargo molecules. This chain is AP-1 complex subunit mu-2, found in Bos taurus (Bovine).